The primary structure comprises 616 residues: Spastin (616 aa).

The segment at 1–43 is disordered; sequence MNSPGGRGKKKGSGGASNPVPPRPPPPCLAPAPPAAGPAPPPE. Residues 1–50 are required for nuclear localization; that stretch reads MNSPGGRGKKKGSGGASNPVPPRPPPPCLAPAPPAAGPAPPPESPHKRNL. Residues 1–56 lie on the Cytoplasmic side of the membrane; that stretch reads MNSPGGRGKKKGSGGASNPVPPRPPPPCLAPAPPAAGPAPPPESPHKRNLYYFSYP. The tract at residues 1–80 is required for interaction with ATL1; the sequence is MNSPGGRGKK…LGLLFVWLCQ (80 aa). The interval 1 to 194 is required for midbody localization; sequence MNSPGGRGKK…LVMAKDRLQL (194 aa). Residues 1–300 are required for interaction with RTN1; that stretch reads MNSPGGRGKK…GTPKTNRTNK (300 aa). A Nuclear localization signal motif is present at residues 4 to 11; the sequence is PGGRGKKK. The span at 19-43 shows a compositional bias: pro residues; the sequence is PVPPRPPPPCLAPAPPAAGPAPPPE. The required for interaction with SSNA1 and microtubules stretch occupies residues 50-87; it reads LYYFSYPLFVGFALLRLVAFHLGLLFVWLCQRFSRALM. The helical intramembrane region spans 57–77; that stretch reads LFVGFALLRLVAFHLGLLFVW. Residues 59–67 carry the Nuclear export signal motif; it reads VGFALLRLV. At 78–616 the chain is on the cytoplasmic side; sequence LCQRFSRALM…WNKDFGDTTV (539 aa). Positions 112 to 196 are sufficient for interaction with CHMP1B; the sequence is EAERVRVFHK…MAKDRLQLLE (85 aa). Residues 114–200 form a required for interaction with microtubules region; that stretch reads ERVRVFHKQA…RLQLLEKMQP (87 aa). Residues 120 to 195 enclose the MIT domain; it reads HKQAFEYISI…VMAKDRLQLL (76 aa). The tract at residues 224–266 is disordered; that stretch reads HLQSESGAVPKRKDPLTHTSNSLPRSKTVMKTGSAGLSGHHRA. Positions 228–616 are sufficient for microtubule severing; that stretch reads ESGAVPKRKD…WNKDFGDTTV (389 aa). Polar residues predominate over residues 240–254; the sequence is THTSNSLPRSKTVMK. Phosphoserine is present on residues Ser-245 and Ser-268. The interval 270 to 328 is required for interaction with microtubules and microtubule severing; the sequence is SGLSMVSGVKQGSGPAPTTHKGTPKTNRTNKPSTPTTATRKKKDLKNFRNVDSNLANLI. Positions 278–312 are disordered; sequence VKQGSGPAPTTHKGTPKTNRTNKPSTPTTATRKKK. The segment covering 289–307 has biased composition (polar residues); it reads HKGTPKTNRTNKPSTPTTA. A Phosphothreonine modification is found at Thr-306. Positions 309 to 312 match the Nuclear localization signal motif; it reads RKKK. Residues 310–312 are required for interaction with microtubules; that stretch reads KKK. 382 to 389 is a binding site for ATP; that stretch reads GPPGNGKT. At Ser-597 the chain carries Phosphoserine.

This sequence belongs to the AAA ATPase family. Spastin subfamily. Homohexamer. Mostly monomeric, but assembles into hexameric structure for short periods of time. Oligomerization seems to be a prerequisite for catalytic activity. Binding to ATP in a cleft between two adjacent subunits stabilizes the homohexameric form. Binds to microtubules at least in part via the alpha-tubulin and beta-tubulin tails. The hexamer adopts a ring conformation through which microtubules pass prior to being severed. Does not interact strongly with tubulin heterodimers. Interacts (via MIT domain) with CHMP1B; the interaction is direct. Interacts with SSNA1. Interacts with ATL1. Interacts with RTN1. Interacts with ZFYVE27. Isoform 1 but not isoform 3 interacts with RTN2. Interacts with REEP1. Interacts (via MIT domain) with IST1. Expressed in brain, heart, kidney, liver, lung, pancreas, placenta and skeletal muscle. The short isoforms may predominate in brain and spinal cord.

It localises to the membrane. It is found in the endoplasmic reticulum. The protein resides in the midbody. Its subcellular location is the cytoplasm. The protein localises to the cytoskeleton. It localises to the microtubule organizing center. It is found in the centrosome. The protein resides in the perinuclear region. Its subcellular location is the nucleus. The protein localises to the spindle. It localises to the cell projection. It is found in the axon. The protein resides in the endoplasmic reticulum membrane. Its subcellular location is the nucleus membrane. The protein localises to the lipid droplet. It localises to the endosome. It catalyses the reaction n ATP + n H2O + a microtubule = n ADP + n phosphate + (n+1) alpha/beta tubulin heterodimers.. With respect to regulation, allosteric enzyme with a cooperative mechanism; at least two neighbor subunits influence each other strongly in spastin hexamers. Microtubule binding promotes cooperative interactions among spastin subunits. ATP-bound enzyme interacts strongly and cooperatively with microtubules; this interaction stimulates ATP hydrolysis. ATP-dependent microtubule severing protein that specifically recognizes and cuts microtubules that are polyglutamylated. Preferentially recognizes and acts on microtubules decorated with short polyglutamate tails: severing activity increases as the number of glutamates per tubulin rises from one to eight, but decreases beyond this glutamylation threshold. Severing activity is not dependent on tubulin acetylation or detyrosination. Microtubule severing promotes reorganization of cellular microtubule arrays and the release of microtubules from the centrosome following nucleation. It is critical for the biogenesis and maintenance of complex microtubule arrays in axons, spindles and cilia. SPAST is involved in abscission step of cytokinesis and nuclear envelope reassembly during anaphase in cooperation with the ESCRT-III complex. Recruited at the midbody, probably by IST1, and participates in membrane fission during abscission together with the ESCRT-III complex. Recruited to the nuclear membrane by IST1 and mediates microtubule severing, promoting nuclear envelope sealing and mitotic spindle disassembly during late anaphase. Required for membrane traffic from the endoplasmic reticulum (ER) to the Golgi and endosome recycling. Recruited by IST1 to endosomes and regulates early endosomal tubulation and recycling by mediating microtubule severing. Probably plays a role in axon growth and the formation of axonal branches. In terms of biological role, involved in lipid metabolism by regulating the size and distribution of lipid droplets. The sequence is that of Spastin from Homo sapiens (Human).